A 260-amino-acid polypeptide reads, in one-letter code: UPF0246 protein Mmwyl1_3597 (260 aa).

It belongs to the UPF0246 family.

This Marinomonas sp. (strain MWYL1) protein is UPF0246 protein Mmwyl1_3597.